The following is a 110-amino-acid chain: Nucleoid-associated protein KPK_4227 (110 aa).

The disordered stretch occupies residues 1-22; it reads MFGGKGGLGNLMKQAQQMQDKM.

This sequence belongs to the YbaB/EbfC family. As to quaternary structure, homodimer.

The protein resides in the cytoplasm. It is found in the nucleoid. Binds to DNA and alters its conformation. May be involved in regulation of gene expression, nucleoid organization and DNA protection. In Klebsiella pneumoniae (strain 342), this protein is Nucleoid-associated protein KPK_4227.